The chain runs to 462 residues: MSNQHNQEKLSSARFSEATDAFVEEFTASIQFDKRMYRQDIQGSVAHAKMLHKVGILDKQELKDIIDGLEKVQSDIEAGKMNWSIKQEDIHMNIEAKLTELIGITGKKLHTGRSRNDQVATDIRLYLRDEIDAILPEMARLQHGILLLAEKEAETIMPGFTHLQTAQPVTFGHHMMAWFEMIKRDVERLEDCRKRVNTMPLGSAALAGTTYPIQREYTAELLQFDRISENSLDGVSDRDFAIEFTAFAATFLMHLSRFSEELVLWSSAQFNFIDLPDRFCTGSSIMPQKKNPDVPELVRGKTGRVYGHLMSLLTLMKSQPLAYNKDNQEDKEPLFDTVDTVKGSLRAFADMVPAIIVNREATYAAAKQGFSTATDLADYLVNKGLPFRDAHEVVGLAVAHGIQTGQDLSEMPLETLQAFHSSITDDVFEVLTLEGSVSARDHLGGTAPKQVKAAIKRAKDRL.

The protein belongs to the lyase 1 family. Argininosuccinate lyase subfamily.

The protein localises to the cytoplasm. The catalysed reaction is 2-(N(omega)-L-arginino)succinate = fumarate + L-arginine. It participates in amino-acid biosynthesis; L-arginine biosynthesis; L-arginine from L-ornithine and carbamoyl phosphate: step 3/3. This chain is Argininosuccinate lyase, found in Hydrogenovibrio crunogenus (strain DSM 25203 / XCL-2) (Thiomicrospira crunogena).